Here is a 149-residue protein sequence, read N- to C-terminus: Gonadotropin subunit beta-2 (149 aa).

An N-terminal signal peptide occupies residues 1–24 (MARIPECTILLLLCMCVLAVPAQC). 6 disulfide bridges follow: C30-C78, C44-C93, C47-C131, C55-C109, C59-C111, and C114-C121. N-linked (GlcNAc...) asparagine glycosylation occurs at N34.

This sequence belongs to the glycoprotein hormones subunit beta family. As to quaternary structure, heterodimer of an alpha and a beta chain.

Its subcellular location is the secreted. Involved in gametogenesis and steroidogenesis. This is Gonadotropin subunit beta-2 (cgbb) from Clupea pallasii (Pacific herring).